The primary structure comprises 748 residues: Structure-specific endonuclease subunit SLX4 (748 aa).

Residues 62-75 (KSVTAQKSPMTQET) show a composition bias toward polar residues. The disordered stretch occupies residues 62–104 (KSVTAQKSPMTQETTKNDTERNKDVDKSCNPVSTSHPDLGGSN). Threonine 72 carries the post-translational modification Phosphothreonine; by ATR and ATM. The segment covering 76–88 (TKNDTERNKDVDK) has biased composition (basic and acidic residues). Threonine 113 carries the post-translational modification Phosphothreonine; by ATR and ATM. Disordered stretches follow at residues 215–236 (IKTQNEGNSDKPPRARNNKGEK) and 277–303 (EKSSNSLDNQESSQQRLWTASQLPPEL). Residues 222 to 236 (NSDKPPRARNNKGEK) are compositionally biased toward basic and acidic residues. Residues 277 to 298 (EKSSNSLDNQESSQQRLWTASQ) show a composition bias toward polar residues. Residue serine 289 is modified to Phosphoserine; by ATR and ATM. Threonine 319 is modified (phosphothreonine; by ATR and ATM). Serine 329 and serine 355 each carry phosphoserine; by ATR and ATM. Over residues 591-602 (ISTKDSTQNPTT) the composition is skewed to polar residues. The segment at 591-610 (ISTKDSTQNPTTSNDIIDTS) is disordered.

This sequence belongs to the SLX4 family. In terms of assembly, forms a heterodimer with SLX1. Interacts with RAD1; catalytic subunit of the RAD1-RAD10 endonuclease. Interacts with RTT107. Phosphorylated by ATR (MEC1) and ATM (TEL1) upon DNA damage. This appears to be required for the function with the RAD1-RAD10 endonuclease.

The protein resides in the nucleus. It localises to the cytoplasm. Its function is as follows. Regulatory subunit that interacts with and increases the activity of different structure-specific endonucleases. Has several distinct roles in protecting genome stability by resolving diverse forms of deleterious DNA structures. Component of the SLX1-SLX4 structure-specific endonuclease that resolves DNA secondary structures generated during DNA repair and recombination. Has endonuclease activity towards branched DNA substrates, introducing single-strand cuts in duplex DNA close to junctions with ss-DNA. Has a preference for simple Y, 5'-flap and replication fork-like structures. It cleaves the strand bearing the 5'-non-homologous arm at the branch site junction and generates ligatable, nicked products from the 5'-flap or replication fork substrates. Plays a critical role in maintaining the integrity of the ribosomal DNA (rDNA) loci, where it has a role in re-starting stalled replication forks. Has Holliday junction resolvase activity in vitro. Interacts with the structure-specific RAD1-RAD10 endonuclease and promotes RAD1-RAD10-dependent 3'-non-homologous tail removal (NHTR) during repair of double-strand breaks by single-strand annealing. SLX4 also promotes recovery from DNA-alkylation-induced replisome stalling during DNA replication by facilitating the error-free mode of lesion bypass. This does not require SLX1 or RAD1-RAD10, but probably RTT107. In Saccharomyces cerevisiae (strain RM11-1a) (Baker's yeast), this protein is Structure-specific endonuclease subunit SLX4.